Here is a 307-residue protein sequence, read N- to C-terminus: Glutathione synthetase (307 aa).

One can recognise an ATP-grasp domain in the interval 120–304; it reads KLGALRYSHL…VSDKVIEKLL (185 aa). 146 to 202 contacts ATP; it reads AQINHDVVVKPLGGKGGQGVIRLTKDSPGIKAMIELITSQEQLPVMMQKFIPEVKEG. Residues glutamate 275 and asparagine 277 each contribute to the Mg(2+) site.

The protein belongs to the prokaryotic GSH synthase family. Requires Mg(2+) as cofactor. The cofactor is Mn(2+).

It catalyses the reaction gamma-L-glutamyl-L-cysteine + glycine + ATP = glutathione + ADP + phosphate + H(+). Its pathway is sulfur metabolism; glutathione biosynthesis; glutathione from L-cysteine and L-glutamate: step 2/2. This chain is Glutathione synthetase, found in Prochlorococcus marinus subsp. pastoris (strain CCMP1986 / NIES-2087 / MED4).